Here is a 346-residue protein sequence, read N- to C-terminus: MMKRALTGIQASGKQHLGNYLGVMQSLIELQEQCQLFVFVADLHSITVDFQPQALKQNNFDLVRTLLAVGLDPQKACLFLQSDLLEHSMMGYLMMVQSNLGELQRMTQFKAKKAEQTRNPNGTLNIPTGLLTYPALMAGDILLYQPDIVPVGNDQKQHLELTRDLAQRIQKKFKLKLRLPQFVQNKDTNRIMDLFDPTKKMSKSSKNQNGVIYLDDPKEVVVKKIRQATTDSFNKIRFAPKTQPGVTNMLTILKALLKEPVNQSLTNQLGNDLEAYFSTKSYLDLKNALTEATVNLLVNIQRKREQISREQVFNCLQAGKNQAQATARTTLALFYDGFGLGSQNIK.

Residues 10–12 (QAS) and 18–19 (GN) contribute to the ATP site. Residues 11 to 19 (ASGKQHLGN) carry the 'HIGH' region motif. Residue aspartate 140 participates in L-tryptophan binding. ATP-binding positions include 152 to 154 (GND), isoleucine 191, and 200 to 204 (KMSKS). The 'KMSKS' region motif lies at 200 to 204 (KMSKS).

The protein belongs to the class-I aminoacyl-tRNA synthetase family. In terms of assembly, homodimer.

The protein localises to the cytoplasm. The catalysed reaction is tRNA(Trp) + L-tryptophan + ATP = L-tryptophyl-tRNA(Trp) + AMP + diphosphate + H(+). Functionally, catalyzes the attachment of tryptophan to tRNA(Trp). The polypeptide is Tryptophan--tRNA ligase (Mycoplasma pneumoniae (strain ATCC 29342 / M129 / Subtype 1) (Mycoplasmoides pneumoniae)).